A 443-amino-acid polypeptide reads, in one-letter code: C4-dicarboxylate transport protein (443 aa).

The next 7 helical transmembrane spans lie at 7 to 26 (SLYV…GALF), 46 to 63 (MVIA…VAHM), 76 to 98 (ALIY…MNVL), 140 to 162 (LVSA…FGFA), 183 to 205 (VVFV…AMAF), 218 to 240 (LGYL…LGLI), and 350 to 372 (FITL…ALIL). Residues 415-443 (GEDLPTTEPDVASEERGEGREIDSSRPVT) form a disordered region. A compositionally biased stretch (basic and acidic residues) spans 427–443 (SEERGEGREIDSSRPVT).

The protein belongs to the dicarboxylate/amino acid:cation symporter (DAACS) (TC 2.A.23) family.

The protein resides in the cell membrane. Its function is as follows. Responsible for the transport of dicarboxylates such as succinate, fumarate, and malate across the membrane. The polypeptide is C4-dicarboxylate transport protein (dctA) (Deinococcus radiodurans (strain ATCC 13939 / DSM 20539 / JCM 16871 / CCUG 27074 / LMG 4051 / NBRC 15346 / NCIMB 9279 / VKM B-1422 / R1)).